A 340-amino-acid chain; its full sequence is tRNA N6-adenosine threonylcarbamoyltransferase (340 aa).

Fe cation contacts are provided by His-111 and His-115. Substrate contacts are provided by residues Leu-134–Gly-138, Asp-167, Gly-180, and Asn-276. Position 304 (Asp-304) interacts with Fe cation.

This sequence belongs to the KAE1 / TsaD family. The cofactor is Fe(2+).

It localises to the cytoplasm. It carries out the reaction L-threonylcarbamoyladenylate + adenosine(37) in tRNA = N(6)-L-threonylcarbamoyladenosine(37) in tRNA + AMP + H(+). Functionally, required for the formation of a threonylcarbamoyl group on adenosine at position 37 (t(6)A37) in tRNAs that read codons beginning with adenine. Is involved in the transfer of the threonylcarbamoyl moiety of threonylcarbamoyl-AMP (TC-AMP) to the N6 group of A37, together with TsaE and TsaB. TsaD likely plays a direct catalytic role in this reaction. The protein is tRNA N6-adenosine threonylcarbamoyltransferase of Helicobacter pylori (strain J99 / ATCC 700824) (Campylobacter pylori J99).